Reading from the N-terminus, the 60-residue chain is UPF0434 protein YcaR (60 aa).

This sequence belongs to the UPF0434 family.

The sequence is that of UPF0434 protein YcaR from Escherichia coli O139:H28 (strain E24377A / ETEC).